The primary structure comprises 231 residues: Endonuclease NucS (231 aa).

It belongs to the NucS endonuclease family.

It localises to the cytoplasm. In terms of biological role, cleaves both 3' and 5' ssDNA extremities of branched DNA structures. In Arthrobacter sp. (strain FB24), this protein is Endonuclease NucS.